Here is a 676-residue protein sequence, read N- to C-terminus: Phosphatidylinositol-3,5-bisphosphate 3-phosphatase MTMR6 (676 aa).

The 377-residue stretch at 125-501 (GWRRLDWNSE…ARFTVWTAMY (377 aa)) folds into the Myotubularin phosphatase domain. Residues N249, N274, and I275 each coordinate a 1,2-diacyl-sn-glycero-3-phospho-(1D-myo-inositol-3,5-bisphosphate). Residues N249, N274, and I275 each contribute to the a 1,2-diacyl-sn-glycero-3-phospho-(1D-myo-inositol-3-phosphate) site. Substrate-binding positions include 249 to 252 (NKVQ), 274 to 275 (NI), and 335 to 341 (CSDGWDR). Catalysis depends on C335, which acts as the Phosphocysteine intermediate. 8 residues coordinate a 1,2-diacyl-sn-glycero-3-phospho-(1D-myo-inositol-3,5-bisphosphate): S336, D337, G338, W339, D340, R341, K377, and R381. A 1,2-diacyl-sn-glycero-3-phospho-(1D-myo-inositol-3-phosphate)-binding residues include S336, D337, G338, W339, D340, and R341. R381 is a binding site for a 1,2-diacyl-sn-glycero-3-phospho-(1D-myo-inositol-3-phosphate). R381 contacts substrate. Residues 618–675 (KWQPLRGADRCSNPACRGEFSSTIERRIHCHLCGMIFCRRCLKVSADERERVCDKCKT) form an FYVE-type zinc finger.

It belongs to the protein-tyrosine phosphatase family. Non-receptor class myotubularin subfamily. In terms of assembly, heterodimer with mtm-9. In terms of tissue distribution, expressed in intestinal cells. Expressed in head neurons, pre-anal ganglion, hypodermal cells, anal depressor muscle and non-neuronal cells in the tail.

It localises to the cytoplasm. It is found in the membrane. Its subcellular location is the apical cell membrane. It catalyses the reaction a 1,2-diacyl-sn-glycero-3-phospho-(1D-myo-inositol-3,5-bisphosphate) + H2O = a 1,2-diacyl-sn-glycero-3-phospho-(1D-myo-inositol-5-phosphate) + phosphate. The catalysed reaction is a 1,2-diacyl-sn-glycero-3-phospho-(1D-myo-inositol-3-phosphate) + H2O = a 1,2-diacyl-sn-glycero-3-phospho-(1D-myo-inositol) + phosphate. It carries out the reaction 1,2-dioctanoyl-sn-glycero-3-phospho-(1D-myo-inositol-3,5-bisphosphate) + H2O = 1,2-dioctanoyl-sn-glycero-3-phospho-(1D-myo-inositol-5-phosphate) + phosphate. The enzyme catalyses 1,2-dioctanoyl-sn-glycero-3-phospho-(1-D-myo-inositol-3-phosphate) + H2O = 1,2-dioctanoyl-sn-glycero-3-phospho-(1D-myo-inositol) + phosphate. Functionally, probable lipid phosphatase that specifically dephosphorylates the D-3 position of phosphatidylinositol 3-phosphate and phosphatidylinositol 3,5-bisphosphate, generating phosphatidylinositol and phosphatidylinositol 5-phosphate. In association with mtm-9, plays a role in endosome trafficking probably by regulating phosphatidylinositol-3-phosphate levels. Regulates fluid phase endocytosis in coelomocytes. Controls the endosomal localization of sorting nexin snx-3 and the levels of sorting receptor mig-14. By regulating the retrograde transport of mig-14, may be involved in the secretion of Wnt ligands such as egl-20. Regulates posterior migration of QL neuroblast descendants and the anterior migration of QR neuroblast descendants and HSN neurons during larval development. Involved in the formation of correct synapse number in DA9 motor neurons probably in part by regulating the secretion of Wnt ligand egl-20. The protein is Phosphatidylinositol-3,5-bisphosphate 3-phosphatase MTMR6 of Caenorhabditis elegans.